The sequence spans 299 residues: Mitochondrial 2-oxodicarboxylate carrier (299 aa).

Solcar repeat units follow at residues 11–100, 107–196, and 205–294; these read REAS…YKKL, SPAL…VKNM, and LEFW…TYSW. The next 6 membrane-spanning stretches (helical) occupy residues 17-37, 70-89, 113-133, 167-187, 205-225, and 277-297; these read IVAGGSAGLVEICLMHPLDVV, FGFYKGILPPILAETPKRAV, AIAGLGSGLTEAIVVNPFEVV, GLNKGLTATLGRHGVFNMVYF, LEFWRKFGIGLLSGTIASVIN, and LGPGGAVMLLVYEYTYSWLQE.

Belongs to the mitochondrial carrier (TC 2.A.29) family. Expressed in placenta, gall bladder and colon.

The protein resides in the mitochondrion inner membrane. It catalyses the reaction 2-oxoadipate(in) + 2-oxoglutarate(out) = 2-oxoadipate(out) + 2-oxoglutarate(in). It carries out the reaction hexanedioate(in) + 2-oxoglutarate(out) = hexanedioate(out) + 2-oxoglutarate(in). The enzyme catalyses L-2-aminoadipate(in) + 2-oxoglutarate(out) = L-2-aminoadipate(out) + 2-oxoglutarate(in). The catalysed reaction is glutarate(in) + 2-oxoglutarate(out) = glutarate(out) + 2-oxoglutarate(in). It catalyses the reaction 2-oxoheptanedioate(in) + 2-oxoglutarate(out) = 2-oxoheptanedioate(out) + 2-oxoglutarate(in). It carries out the reaction heptanedioate(in) + 2-oxoglutarate(out) = heptanedioate(out) + 2-oxoglutarate(in). The enzyme catalyses citrate(in) + 2-oxoglutarate(out) = citrate(out) + 2-oxoglutarate(in). Its function is as follows. Transports dicarboxylates across the inner membranes of mitochondria by a counter-exchange mechanism. Can transport 2-oxoadipate (2-oxohexanedioate), 2-oxoglutarate, adipate (hexanedioate), glutarate, and to a lesser extent, pimelate (heptanedioate), 2-oxopimelate (2-oxoheptanedioate), 2-aminoadipate (2-aminohexanedioate), oxaloacetate, and citrate. Plays a central role in catabolism of lysine, hydroxylysine, and tryptophan, by transporting common metabolite intermediates (such as 2-oxoadipate) into the mitochondria, where it is converted into acetyl-CoA and can enter the citric acid (TCA) cycle. This is Mitochondrial 2-oxodicarboxylate carrier (SLC25A21) from Homo sapiens (Human).